Here is a 386-residue protein sequence, read N- to C-terminus: D(1)-like dopamine receptor (386 aa).

The span at 1-10 (MEIFTTTRGT) shows a compositional bias: polar residues. Residues 1-28 (MEIFTTTRGTSAGPEPAPGGHGGTDSPR) are disordered. The Extracellular segment spans residues 1-35 (MEIFTTTRGTSAGPEPAPGGHGGTDSPRTSDLSLR). A helical transmembrane segment spans residues 36–56 (ALTGCVLCILIVSTLLGNALV). Residues 57-72 (CAAVIKFRHLRSKVTN) lie on the Cytoplasmic side of the membrane. Residues 73 to 92 (AFVISLAVSDLFVAVLVMPW) traverse the membrane as a helical segment. The Extracellular portion of the chain corresponds to 93 to 109 (RAVSEVAGVWLFGAFCD). A disulfide bridge connects residues C108 and C188. A helical membrane pass occupies residues 110–131 (TWVAFDIMCSTASILHLCIISM). The Cytoplasmic portion of the chain corresponds to 132–150 (DRYWAISSPFRYERRMTPR). Residues 151–175 (FGCVMIGVAWTLSVLISFIPVQLNW) traverse the membrane as a helical segment. Residues 176 to 195 (HARGRERTDPGDCNASLNRT) are Extracellular-facing. Residues N189 and N193 are each glycosylated (N-linked (GlcNAc...) asparagine). A helical membrane pass occupies residues 196–220 (YAISSSLISFYIPVLIMVGTYTRIF). Residues 221 to 266 (RIGRTQIRRISSLERAAPRATRGPALCDEESSLKTSFRRETKVLKT) are Cytoplasmic-facing. Residues 267–292 (LSVIMGVFVFCWLPFFVLNCMVPFCR) traverse the membrane as a helical segment. The Extracellular segment spans residues 293-305 (LEPAAAPCVSDTT). The helical transmembrane segment at 306–325 (FSVFVWFGWANSSLNPVIYA) threads the bilayer. Topologically, residues 326 to 386 (FNADFRKAFS…SRGGPYQFAL (61 aa)) are cytoplasmic.

Belongs to the G-protein coupled receptor 1 family.

The protein localises to the cell membrane. Its subcellular location is the cell projection. The protein resides in the cilium membrane. This is one of the five types (D1 to D5) of receptors for dopamine. The activity of this receptor is mediated by G proteins which activate adenylyl cyclase. The polypeptide is D(1)-like dopamine receptor (Oreochromis mossambicus (Mozambique tilapia)).